Reading from the N-terminus, the 424-residue chain is CinA-like protein (424 aa).

Belongs to the CinA family.

This Nostoc sp. (strain PCC 7120 / SAG 25.82 / UTEX 2576) protein is CinA-like protein.